We begin with the raw amino-acid sequence, 236 residues long: 2,3,4,5-tetrahydropyridine-2,6-dicarboxylate N-acetyltransferase (236 aa).

Belongs to the transferase hexapeptide repeat family. DapH subfamily.

It carries out the reaction (S)-2,3,4,5-tetrahydrodipicolinate + acetyl-CoA + H2O = L-2-acetamido-6-oxoheptanedioate + CoA. Its pathway is amino-acid biosynthesis; L-lysine biosynthesis via DAP pathway; LL-2,6-diaminopimelate from (S)-tetrahydrodipicolinate (acetylase route): step 1/3. Its function is as follows. Catalyzes the transfer of an acetyl group from acetyl-CoA to tetrahydrodipicolinate. The polypeptide is 2,3,4,5-tetrahydropyridine-2,6-dicarboxylate N-acetyltransferase (Bacillus pumilus (strain SAFR-032)).